Here is a 66-residue protein sequence, read N- to C-terminus: Probable Sec-independent protein translocase protein TatE (66 aa).

A helical transmembrane segment spans residues 1–21 (MEGISITKLLVIAVLIVLLFG). The tract at residues 46 to 66 (ETPAAKKSDGVEAAPRVENKE) is disordered.

It belongs to the TatA/E family. TatE subfamily.

The protein localises to the cell inner membrane. Its function is as follows. Part of the twin-arginine translocation (Tat) system that transports large folded proteins containing a characteristic twin-arginine motif in their signal peptide across membranes. TatE shares overlapping functions with TatA. The chain is Probable Sec-independent protein translocase protein TatE from Edwardsiella ictaluri (strain 93-146).